The following is a 477-amino-acid chain: Shikimate biosynthesis protein AroDE (477 aa).

Residues 1–209 are 3-dehydroquinate dehydratase; it reads MLCATVSGPS…LEELLSYNYS (209 aa). Residues S21, 29-31, and 56-58 contribute to the 3-dehydroquinate site; these read ELR and TFR. H111 functions as the Proton donor/acceptor; for 3-dehydroquinate dehydratase activity in the catalytic mechanism. Catalysis depends on K134, which acts as the Schiff-base intermediate with substrate; for 3-dehydroquinate dehydratase activity. The 3-dehydroquinate site is built by R172 and Q197. Residues 210-477 are shikimate 5-dehydrogenase; it reads KLSEKSHIYG…NYVKNFMAKV (268 aa). 228–230 is a shikimate binding site; sequence SIS. Residue K279 is the Proton acceptor; for shikimate dehydrogenase activity of the active site. The shikimate site is built by N300 and D315. NADP(+) is bound by residues 339–343, 362–364, and G438; these read GAGGA and NRT. Q445 is a shikimate binding site.

This sequence in the N-terminal section; belongs to the type-I 3-dehydroquinase family. The protein in the C-terminal section; belongs to the shikimate dehydrogenase family.

It carries out the reaction 3-dehydroquinate = 3-dehydroshikimate + H2O. The catalysed reaction is shikimate + NADP(+) = 3-dehydroshikimate + NADPH + H(+). It functions in the pathway metabolic intermediate biosynthesis; chorismate biosynthesis; chorismate from D-erythrose 4-phosphate and phosphoenolpyruvate: step 3/7. It participates in metabolic intermediate biosynthesis; chorismate biosynthesis; chorismate from D-erythrose 4-phosphate and phosphoenolpyruvate: step 4/7. Bifunctional enzyme that catalyzes two sequential steps of the aromatic amino acids biosynthetic pathway. In the first reaction, the AroD domain catalyzes the cis-dehydration of 3-dehydroquinate (DHQ) and introduces the first double bond of the aromatic ring to yield 3-dehydroshikimate; in the second reaction, the AroE domain catalyzes the reversible NADPH linked reduction of 3-dehydroshikimate (DHSA) to yield shikimate (SA). The polypeptide is Shikimate biosynthesis protein AroDE (Chlamydia pneumoniae (Chlamydophila pneumoniae)).